The following is a 261-amino-acid chain: Undecaprenyl-diphosphatase (261 aa).

The next 7 membrane-spanning stretches (helical) occupy residues 38–58 (RSDFFNIVIQAGAILAITFVF), 75–95 (RDYVMKLATAFLITAVVGLAV), 106–126 (IQPIAWALIIGGIWILIAESV), 136–156 (VTWSVAIAVGLAQVVAGVFPG), 181–201 (FSFLVGIPTMFSASSYACFEL), 217–237 (VAFVAAMLTGFAVVKWLLGYI), and 241–261 (SFAPFAYYRIALGLVLLTWLT).

The protein belongs to the UppP family.

The protein resides in the cell inner membrane. It carries out the reaction di-trans,octa-cis-undecaprenyl diphosphate + H2O = di-trans,octa-cis-undecaprenyl phosphate + phosphate + H(+). Its function is as follows. Catalyzes the dephosphorylation of undecaprenyl diphosphate (UPP). Confers resistance to bacitracin. The polypeptide is Undecaprenyl-diphosphatase (Xylella fastidiosa (strain Temecula1 / ATCC 700964)).